The following is a 69-amino-acid chain: Putative membrane protein insertion efficiency factor (69 aa).

Belongs to the UPF0161 family.

It localises to the cell inner membrane. Functionally, could be involved in insertion of integral membrane proteins into the membrane. The protein is Putative membrane protein insertion efficiency factor of Dechloromonas aromatica (strain RCB).